The primary structure comprises 271 residues: ATP synthase subunit delta (271 aa).

The protein belongs to the ATPase delta chain family. In terms of assembly, F-type ATPases have 2 components, F(1) - the catalytic core - and F(0) - the membrane proton channel. F(1) has five subunits: alpha(3), beta(3), gamma(1), delta(1), epsilon(1). F(0) has three main subunits: a(1), b(2) and c(10-14). The alpha and beta chains form an alternating ring which encloses part of the gamma chain. F(1) is attached to F(0) by a central stalk formed by the gamma and epsilon chains, while a peripheral stalk is formed by the delta and b chains.

The protein localises to the cell membrane. In terms of biological role, f(1)F(0) ATP synthase produces ATP from ADP in the presence of a proton or sodium gradient. F-type ATPases consist of two structural domains, F(1) containing the extramembraneous catalytic core and F(0) containing the membrane proton channel, linked together by a central stalk and a peripheral stalk. During catalysis, ATP synthesis in the catalytic domain of F(1) is coupled via a rotary mechanism of the central stalk subunits to proton translocation. Functionally, this protein is part of the stalk that links CF(0) to CF(1). It either transmits conformational changes from CF(0) to CF(1) or is implicated in proton conduction. This Beutenbergia cavernae (strain ATCC BAA-8 / DSM 12333 / CCUG 43141 / JCM 11478 / NBRC 16432 / NCIMB 13614 / HKI 0122) protein is ATP synthase subunit delta.